The sequence spans 368 residues: UDP-N-acetylglucosamine--N-acetylmuramyl-(pentapeptide) pyrophosphoryl-undecaprenol N-acetylglucosamine transferase (368 aa).

UDP-N-acetyl-alpha-D-glucosamine is bound by residues 10 to 12, Asn-128, Arg-170, Ser-199, Ile-250, and Gln-295; that span reads TGG.

It belongs to the glycosyltransferase 28 family. MurG subfamily.

The protein localises to the cell inner membrane. It carries out the reaction di-trans,octa-cis-undecaprenyl diphospho-N-acetyl-alpha-D-muramoyl-L-alanyl-D-glutamyl-meso-2,6-diaminopimeloyl-D-alanyl-D-alanine + UDP-N-acetyl-alpha-D-glucosamine = di-trans,octa-cis-undecaprenyl diphospho-[N-acetyl-alpha-D-glucosaminyl-(1-&gt;4)]-N-acetyl-alpha-D-muramoyl-L-alanyl-D-glutamyl-meso-2,6-diaminopimeloyl-D-alanyl-D-alanine + UDP + H(+). It functions in the pathway cell wall biogenesis; peptidoglycan biosynthesis. Functionally, cell wall formation. Catalyzes the transfer of a GlcNAc subunit on undecaprenyl-pyrophosphoryl-MurNAc-pentapeptide (lipid intermediate I) to form undecaprenyl-pyrophosphoryl-MurNAc-(pentapeptide)GlcNAc (lipid intermediate II). The chain is UDP-N-acetylglucosamine--N-acetylmuramyl-(pentapeptide) pyrophosphoryl-undecaprenol N-acetylglucosamine transferase from Chlorobium phaeovibrioides (strain DSM 265 / 1930) (Prosthecochloris vibrioformis (strain DSM 265)).